Reading from the N-terminus, the 74-residue chain is Putative defensin-like protein 36 (74 aa).

An N-terminal signal peptide occupies residues 1–22; sequence MASNKVSFFLVLCLCILLAGEC. Intrachain disulfides connect Cys-33/Cys-59, Cys-45/Cys-69, and Cys-49/Cys-71.

This sequence belongs to the DEFL family.

The protein resides in the secreted. The polypeptide is Putative defensin-like protein 36 (Arabidopsis thaliana (Mouse-ear cress)).